A 170-amino-acid chain; its full sequence is MTRSQKEEVVQYLTEEFKNAAAIVDCDYKGMSVSELESLRRIAKEKGLKVRVVKNTLAMIALRNNGVEDFQLKDTNVLIWGDDLVELAKTVTDFAKEHKENFQIKQGYFEGEVADASKIEAYSKLPSKEELLGMLLSVWTAPIRNLLYVWNAPKQNFVTVLENIRQQKES.

It belongs to the universal ribosomal protein uL10 family. Part of the ribosomal stalk of the 50S ribosomal subunit. The N-terminus interacts with L11 and the large rRNA to form the base of the stalk. The C-terminus forms an elongated spine to which L12 dimers bind in a sequential fashion forming a multimeric L10(L12)X complex.

Forms part of the ribosomal stalk, playing a central role in the interaction of the ribosome with GTP-bound translation factors. The protein is Large ribosomal subunit protein uL10 of Nitratiruptor sp. (strain SB155-2).